Reading from the N-terminus, the 704-residue chain is SH3KBP1-binding protein 1 (704 aa).

Residue Ala2 is modified to N-acetylalanine. Positions 19–88 constitute a BTB domain; that stretch reads EVIHLNVGGK…LRTKELDPRG (70 aa). Residues 146–165 are disordered; it reads VGPQQIGGRPAPVRRSNTMP. The residue at position 163 (Thr163) is a Phosphothreonine. WD repeat units lie at residues 233-280, 283-322, 324-359, 428-466, and 548-586; these read RLDW…GGSE, VFHLGVPVEALFFVGNQLIATSHTGRIGVWNAVTKHWQVQ, VQPITSYDAAGSFLLLGCSNGSIYYVDVQKFPLRMK, VHRSPVTKIMLSEKHLISVCADNNHVRTWSVTRFRGMIS, and LECEGSRRLGSRPRRYLLTGQANGSLAMWDLTTAMDGLG. Positions 609-704 are disordered; the sequence is PLTSSRASFP…PKNTLNETSF (96 aa). The span at 611 to 631 shows a compositional bias: low complexity; that stretch reads TSSRASFPSPSPRTSLTSLHS. Residues 618–623 carry the PXXXPR motif; that stretch reads PSPSPR. A phosphoserine mark is found at Ser644 and Ser646. Residues 678-683 carry the PXXXPR motif; that stretch reads PTPAPR.

This sequence belongs to the KCTD3 family. In terms of assembly, monomer. Interacts with CUL3; interaction is direct and forms a 5:5 heterodecamer. Interacts (via PXXXPR motifs) with SH3KBP1 (via SH3 domains). Directly interacts with cathepsin B/CTSB.

The protein resides in the lysosome. Functionally, inhibits CBL-SH3KBP1 complex mediated down-regulation of EGFR signaling by sequestration of SH3KBP1. Binds to SH3KBP1 and prevents its interaction with CBL and inhibits translocation of SH3KBP1 to EGFR containing vesicles upon EGF stimulation. This Rattus norvegicus (Rat) protein is SH3KBP1-binding protein 1 (Shkbp1).